A 359-amino-acid polypeptide reads, in one-letter code: Protein-glutamate methylesterase/protein-glutamine glutaminase 2 (359 aa).

A Response regulatory domain is found at 6 to 123; that stretch reads KVMIVDDSAL…KSFLEDASND (118 aa). Asp57 carries the 4-aspartylphosphate modification. One can recognise a CheB-type methylesterase domain in the interval 167-359; sequence ERTTDQLVAI…GAIVGYGKSC (193 aa). Active-site residues include Ser179, His205, and Asp301.

It belongs to the CheB family. Phosphorylated by CheA. Phosphorylation of the N-terminal regulatory domain activates the methylesterase activity.

It localises to the cytoplasm. The enzyme catalyses [protein]-L-glutamate 5-O-methyl ester + H2O = L-glutamyl-[protein] + methanol + H(+). The catalysed reaction is L-glutaminyl-[protein] + H2O = L-glutamyl-[protein] + NH4(+). Involved in chemotaxis. Part of a chemotaxis signal transduction system that modulates chemotaxis in response to various stimuli. Catalyzes the demethylation of specific methylglutamate residues introduced into the chemoreceptors (methyl-accepting chemotaxis proteins or MCP) by CheR. Also mediates the irreversible deamidation of specific glutamine residues to glutamic acid. This Dechloromonas aromatica (strain RCB) protein is Protein-glutamate methylesterase/protein-glutamine glutaminase 2.